We begin with the raw amino-acid sequence, 355 residues long: Adenine deaminase (355 aa).

3 residues coordinate Zn(2+): His-24, His-26, and His-204. Residue Glu-207 is the Proton donor of the active site. Position 285 (Asp-285) interacts with Zn(2+). A substrate-binding site is contributed by Asp-286.

It belongs to the metallo-dependent hydrolases superfamily. Adenosine and AMP deaminases family. Adenine deaminase type 2 subfamily. Requires Zn(2+) as cofactor.

The enzyme catalyses adenine + H2O + H(+) = hypoxanthine + NH4(+). Its function is as follows. Catalyzes the hydrolytic deamination of adenine to hypoxanthine. Plays an important role in the purine salvage pathway and in nitrogen catabolism. The sequence is that of Adenine deaminase from Geotalea uraniireducens (strain Rf4) (Geobacter uraniireducens).